The primary structure comprises 172 residues: Macro domain-containing protein CT2219 (172 aa).

In terms of domain architecture, Macro spans 1–172 (MPDNVLIHAI…DVYQKALAAG (172 aa)).

Belongs to the MacroD-type family.

This chain is Macro domain-containing protein CT2219, found in Chlorobaculum tepidum (strain ATCC 49652 / DSM 12025 / NBRC 103806 / TLS) (Chlorobium tepidum).